The primary structure comprises 203 residues: ADP-ribosylation factor-like protein 6-interacting protein 1 (203 aa).

Topologically, residues 1–41 (MAEGDNRSSNLLAVETASLEEQLQGWGEVMLMADKVLRWER) are cytoplasmic. Residues 42-62 (AWFPPAIMGVVSLLFLIIYYL) form a helical membrane-spanning segment. Residues 63–65 (DPS) lie on the Lumenal side of the membrane. Residues 66–86 (VLSGVSCFVMFLCLADYLVPI) form a helical membrane-spanning segment. The Cytoplasmic segment spans residues 87–133 (LAPRIFGSNKWTTEQQQRFHEICSNLVKTRRRAVGWWKRLFSLKEEK). Residues 134–175 (PKMYFMTMIISLAAVAWVGQQVHNLLLTYLIVTFVLLLPGLN) traverse the membrane as a helical segment. Over 176 to 203 (QHGIILKYIGMAKREINKLLKQKEKKNE) the chain is Lumenal.

It belongs to the ARL6ip family. Homooligomer. Heterodimer with ARL6IP5. Interacts with ARL6. Interacts with TMEM33. Interacts with ATL1. Expressed in the cerebral cortex, cerebellum, hippocampus, olfactory bulbs, medulla oblongate and limbic system (at protein level). Ubiquitous. Expressed in all hematopoietic cell lineages, with highest levels in early myeloid progenitor cells.

It is found in the endomembrane system. It localises to the endoplasmic reticulum membrane. The protein localises to the endoplasmic reticulum. Its function is as follows. Positively regulates SLC1A1/EAAC1-mediated glutamate transport by increasing its affinity for glutamate in a PKC activity-dependent manner. Promotes the catalytic efficiency of SLC1A1/EAAC1 probably by reducing its interaction with ARL6IP5, a negative regulator of SLC1A1/EAAC1-mediated glutamate transport. Plays a role in the formation and stabilization of endoplasmic reticulum tubules. Negatively regulates apoptosis, possibly by modulating the activity of caspase-9 (CASP9). Inhibits cleavage of CASP9-dependent substrates and downstream markers of apoptosis but not CASP9 itself. May be involved in protein transport, membrane trafficking, or cell signaling during hematopoietic maturation. The chain is ADP-ribosylation factor-like protein 6-interacting protein 1 (Arl6ip1) from Mus musculus (Mouse).